The following is a 67-amino-acid chain: Probable Sec-independent protein translocase protein TatE (67 aa).

Residues 1-21 traverse the membrane as a helical segment; that stretch reads MGEISITKLLVVAALVVLLFG. Positions 45–67 are disordered; it reads DEDAGAKKDANGDLPAEKLTHKE.

Belongs to the TatA/E family. TatE subfamily.

It localises to the cell inner membrane. In terms of biological role, part of the twin-arginine translocation (Tat) system that transports large folded proteins containing a characteristic twin-arginine motif in their signal peptide across membranes. TatE shares overlapping functions with TatA. This chain is Probable Sec-independent protein translocase protein TatE, found in Escherichia fergusonii (strain ATCC 35469 / DSM 13698 / CCUG 18766 / IAM 14443 / JCM 21226 / LMG 7866 / NBRC 102419 / NCTC 12128 / CDC 0568-73).